Reading from the N-terminus, the 150-residue chain is 3-hydroxyacyl-[acyl-carrier-protein] dehydratase FabZ (150 aa).

Residue H51 is part of the active site.

The protein belongs to the thioester dehydratase family. FabZ subfamily.

The protein localises to the cytoplasm. It catalyses the reaction a (3R)-hydroxyacyl-[ACP] = a (2E)-enoyl-[ACP] + H2O. In terms of biological role, involved in unsaturated fatty acids biosynthesis. Catalyzes the dehydration of short chain beta-hydroxyacyl-ACPs and long chain saturated and unsaturated beta-hydroxyacyl-ACPs. In Geobacter sulfurreducens (strain ATCC 51573 / DSM 12127 / PCA), this protein is 3-hydroxyacyl-[acyl-carrier-protein] dehydratase FabZ.